The following is a 100-amino-acid chain: MNDAHFNIISKDKNSITVEMINYDNTLLRPLVEEISRDDSVDEIHYYIKHPNLDNPQIHVKVKSGKPQSAIKKSIRRIDRIYNSLIDDLEREEKRLNVSK.

Belongs to the archaeal Rpo11/eukaryotic RPB11/RPC19 RNA polymerase subunit family. In terms of assembly, part of the RNA polymerase complex.

The protein resides in the cytoplasm. The enzyme catalyses RNA(n) + a ribonucleoside 5'-triphosphate = RNA(n+1) + diphosphate. Functionally, DNA-dependent RNA polymerase (RNAP) catalyzes the transcription of DNA into RNA using the four ribonucleoside triphosphates as substrates. This Picrophilus torridus (strain ATCC 700027 / DSM 9790 / JCM 10055 / NBRC 100828 / KAW 2/3) protein is DNA-directed RNA polymerase subunit Rpo11.